Reading from the N-terminus, the 203-residue chain is Glycerol-3-phosphate acyltransferase (203 aa).

The Periplasmic portion of the chain corresponds to 1–3; that stretch reads MSA. The helical transmembrane segment at 4–24 threads the bilayer; it reads IAPGMILFAYLCGSISSAILV. Residues 25–52 lie on the Cytoplasmic side of the membrane; sequence CRIAGLPDPRESGSGNPGATNVLRIGGK. Residues 53–73 form a helical membrane-spanning segment; that stretch reads GAAVAVLIFDILKGMLPVWGA. The Periplasmic segment spans residues 74–80; sequence YALGVTP. The chain crosses the membrane as a helical span at residues 81-101; it reads FWLGLIAIAACLGHIWPVFFG. Topologically, residues 102 to 111 are cytoplasmic; it reads FKGGKGVATA. Residues 112–132 form a helical membrane-spanning segment; sequence FGAIAPIGWDLTGVMAGTWLL. Over 133–137 the chain is Periplasmic; it reads TVLLS. A helical membrane pass occupies residues 138 to 158; sequence GYSSLGAIVSALIAPFYVWWF. The Cytoplasmic portion of the chain corresponds to 159 to 203; it reads KPQFTFPVSMLSCLILLRHHDNIQRLWRRQETKIWTKLKKKRQKD.

It belongs to the PlsY family. In terms of assembly, probably interacts with PlsX.

The protein localises to the cell inner membrane. The catalysed reaction is sn-glycerol 3-phosphate + an acyl-CoA = a 1-acyl-sn-glycero-3-phosphate + CoA. The enzyme catalyses a fatty acyl-[ACP] + sn-glycerol 3-phosphate = a 1-acyl-sn-glycero-3-phosphate + holo-[ACP]. It participates in lipid metabolism; phospholipid metabolism. Functionally, catalyzes the transfer of an acyl group from acyl-ACP to glycerol-3-phosphate (G3P) to form lysophosphatidic acid (LPA). This enzyme can also utilize acyl-CoA as fatty acyl donor, but not acyl-PO(4). This Salmonella agona (strain SL483) protein is Glycerol-3-phosphate acyltransferase.